Reading from the N-terminus, the 290-residue chain is Probable branched-chain-amino-acid aminotransferase (290 aa).

Lysine 155 bears the N6-(pyridoxal phosphate)lysine mark.

The protein belongs to the class-IV pyridoxal-phosphate-dependent aminotransferase family. The cofactor is pyridoxal 5'-phosphate.

It catalyses the reaction L-leucine + 2-oxoglutarate = 4-methyl-2-oxopentanoate + L-glutamate. The enzyme catalyses L-isoleucine + 2-oxoglutarate = (S)-3-methyl-2-oxopentanoate + L-glutamate. It carries out the reaction L-valine + 2-oxoglutarate = 3-methyl-2-oxobutanoate + L-glutamate. Its pathway is amino-acid biosynthesis; L-isoleucine biosynthesis; L-isoleucine from 2-oxobutanoate: step 4/4. It functions in the pathway amino-acid biosynthesis; L-leucine biosynthesis; L-leucine from 3-methyl-2-oxobutanoate: step 4/4. The protein operates within amino-acid biosynthesis; L-valine biosynthesis; L-valine from pyruvate: step 4/4. In terms of biological role, acts on leucine, isoleucine and valine. This is Probable branched-chain-amino-acid aminotransferase (ilvE) from Rickettsia conorii (strain ATCC VR-613 / Malish 7).